The following is a 745-amino-acid chain: DEAD-box ATP-dependent RNA helicase 3A, chloroplastic (745 aa).

The N-terminal 41 residues, 1–41, are a transit peptide targeting the chloroplast; it reads MASLVTLPAIAFSNPATASGAVRLRAAAFRCWALRRRGWAV. The Q motif motif lies at 88–116; the sequence is LAIARLGLPDELVATLEKRGITHLFPIQR. A Helicase ATP-binding domain is found at 119–295; it reads LIPALGGRDL…RRYLNNPLTI (177 aa). 132–139 contacts ATP; it reads AKTGTGKT. Residues 243–246 carry the DEAD box motif; sequence DEAD. Positions 324–469 constitute a Helicase C-terminal domain; that stretch reads ILSDLITVYA…ISPPSIEEVL (146 aa). Residues 606–724 are disordered; it reads LTKISKLPAL…SLGGRESSRS (119 aa). Residues 641–650 show a composition bias toward gly residues; it reads GGGASRGRGG. Basic and acidic residues predominate over residues 656–670; the sequence is EDRYRRGGRSLRSDN. Residues 687-724 show a composition bias toward low complexity; the sequence is RSSSSFGGRSSSYGSRGSPSPSFGVRSSSLGGRESSRS. The CCHC-type zinc-finger motif lies at 727–744; the sequence is GACFNCGESGHRASDCPN.

This sequence belongs to the DEAD box helicase family. DDX21/DDX50 subfamily.

The protein localises to the plastid. It is found in the chloroplast. The enzyme catalyses ATP + H2O = ADP + phosphate + H(+). Nuclear genome-encoded factor involved in ribosome biogenesis in chloroplasts. Binds specific group II introns in chloroplasts and facilitates their splicing. Required for normal development of chloroplasts. The sequence is that of DEAD-box ATP-dependent RNA helicase 3A, chloroplastic from Zea mays (Maize).